Consider the following 141-residue polypeptide: Large ribosomal subunit protein uL16 (141 aa).

Positions 1–21 are disordered; sequence MLMPKRVKYRKQQRGHNRGMA.

The protein belongs to the universal ribosomal protein uL16 family. In terms of assembly, part of the 50S ribosomal subunit.

Its function is as follows. Binds 23S rRNA and is also seen to make contacts with the A and possibly P site tRNAs. This Roseiflexus sp. (strain RS-1) protein is Large ribosomal subunit protein uL16.